A 445-amino-acid chain; its full sequence is Hydroxymethylglutaryl-CoA synthase (445 aa).

Residue aspartate 31 coordinates (3S)-3-hydroxy-3-methylglutaryl-CoA. The Proton donor/acceptor role is filled by glutamate 83. Positions 120, 163, 211, 244, 253, 328, and 364 each coordinate (3S)-3-hydroxy-3-methylglutaryl-CoA. Cysteine 120 serves as the catalytic Acyl-thioester intermediate. Histidine 244 (proton donor/acceptor) is an active-site residue.

This sequence belongs to the thiolase-like superfamily. HMG-CoA synthase family.

The catalysed reaction is acetoacetyl-CoA + acetyl-CoA + H2O = (3S)-3-hydroxy-3-methylglutaryl-CoA + CoA + H(+). It participates in metabolic intermediate biosynthesis; (R)-mevalonate biosynthesis; (R)-mevalonate from acetyl-CoA: step 2/3. With respect to regulation, in contrast to bacterial and eukaryotic HMG-CoA synthases, is insensitive to feedback substrate inhibition by acetoacetyl-CoA. Enzymatic activity is inhibited by hymeglusin, which also blocks the propagation of H.volcanii cells in vivo, indicating the critical role that the mevalonate pathway plays in isoprenoid biosynthesis by these archaea. Catalyzes the condensation of acetyl-CoA with acetoacetyl-CoA to form 3-hydroxy-3-methylglutaryl-CoA (HMG-CoA). Functions in the mevalonate (MVA) pathway leading to isopentenyl diphosphate (IPP), a key precursor for the biosynthesis of isoprenoid compounds such as archaeal membrane lipids. The sequence is that of Hydroxymethylglutaryl-CoA synthase (hmgB) from Haloferax volcanii (strain ATCC 29605 / DSM 3757 / JCM 8879 / NBRC 14742 / NCIMB 2012 / VKM B-1768 / DS2) (Halobacterium volcanii).